Reading from the N-terminus, the 532-residue chain is 2,3-bisphosphoglycerate-independent phosphoglycerate mutase (532 aa).

Positions 15 and 65 each coordinate Mn(2+). Residue S65 is the Phosphoserine intermediate of the active site. Substrate contacts are provided by residues H126, 156-157 (RD), R188, R194, 258-261 (RPDR), and K331. D398, H402, D439, H440, and H457 together coordinate Mn(2+).

The protein belongs to the BPG-independent phosphoglycerate mutase family. In terms of assembly, monomer. Mn(2+) serves as cofactor.

It catalyses the reaction (2R)-2-phosphoglycerate = (2R)-3-phosphoglycerate. It participates in carbohydrate degradation; glycolysis; pyruvate from D-glyceraldehyde 3-phosphate: step 3/5. Functionally, catalyzes the interconversion of 2-phosphoglycerate and 3-phosphoglycerate. The chain is 2,3-bisphosphoglycerate-independent phosphoglycerate mutase from Rippkaea orientalis (strain PCC 8801 / RF-1) (Cyanothece sp. (strain PCC 8801)).